The following is a 136-amino-acid chain: Large ribosomal subunit protein uL16 (136 aa).

It belongs to the universal ribosomal protein uL16 family. In terms of assembly, part of the 50S ribosomal subunit.

Functionally, binds 23S rRNA and is also seen to make contacts with the A and possibly P site tRNAs. The polypeptide is Large ribosomal subunit protein uL16 (Buchnera aphidicola subsp. Cinara cedri (strain Cc)).